A 263-amino-acid polypeptide reads, in one-letter code: Lens fiber major intrinsic protein (263 aa).

Over 1-9 the chain is Cytoplasmic; sequence MWELRSASF. A helical transmembrane segment spans residues 10-29; sequence WRAICAEFFASLFYVFFGLG. The Extracellular portion of the chain corresponds to 30-41; it reads ASLRWAPGPLHV. Residues 42–59 traverse the membrane as a helical segment; the sequence is LQVALAFGLALATLVQAV. The Cytoplasmic segment spans residues 60–61; that stretch reads GH. Positions 62–77 form an intramembrane region, discontinuously helical; sequence ISGAHVNPAVTFAFLV. The NPA 1 signature appears at 68 to 70; the sequence is NPA. At 78 to 82 the chain is on the cytoplasmic side; it reads GSQMS. Residues 83-106 traverse the membrane as a helical segment; that stretch reads LLRAICYMVAQLLGAVAGAAVLYS. The Extracellular segment spans residues 107–127; sequence VTPPAVRGNLALNTLHPGVSV. A helical transmembrane segment spans residues 128–148; it reads GQATIVEIFLTLQFVLCIFAT. Over 149 to 156 the chain is Cytoplasmic; sequence YDERRNGR. Residues 157-175 traverse the membrane as a helical segment; the sequence is LGSVALAVGFSLTLGHLFG. Over 176-178 the chain is Extracellular; that stretch reads MYY. Residues 179-193 constitute an intramembrane region (discontinuously helical); that stretch reads TGAGMNPARSFAPAI. The short motif at 184 to 186 is the NPA 2 element; sequence NPA. The Extracellular segment spans residues 194-200; that stretch reads LTRNFTN. A helical transmembrane segment spans residues 201–222; that stretch reads HWVYWVGPVIGAGLGSLLYDFL. At 223 to 263 the chain is on the cytoplasmic side; the sequence is LFPRLKSVSERLSILKGSRPSESNGQPEVTGEPVELKTQAL. Residues 227–237 form an interaction with CALM region; the sequence is LKSVSERLSIL. The residue at position 235 (Ser235) is a Phosphoserine. Residues 239–263 form a disordered region; that stretch reads GSRPSESNGQPEVTGEPVELKTQAL. The residue at position 243 (Ser243) is a Phosphoserine; by PKA. Ser245 carries the phosphoserine modification. Asn246 is subject to Deamidated asparagine.

The protein belongs to the MIP/aquaporin (TC 1.A.8) family. Homotetramer; each monomer provides an independent water pore. Two homotetramers on opposing membranes can dimerize, forming a cell-cell junction. Interacts with CALM; the calcium-calmodulin/CALM complex interacts with the cytoplasmic domains of two aquaporins, leading to channel closure. Interacts with BFSP1 (via C-terminus); prevents calcium-dependent inhibition of the water channel activity. In terms of processing, fatty acylated at Met-1 and Lys-238. The acyl modifications, in decreasing order of ion abundance, are: oleoyl (C18:1) &gt; palmitoyl (C16:0) &gt; stearoyl (C18:0) &gt; eicosenoyl (C20:1) &gt; dihomo-gamma-linolenoyl (C20:3) &gt; palmitoleoyl (C16:1) &gt; eicosadienoyl (C20:2). Post-translationally, subject to partial proteolytic cleavage in the eye lens core. Partial proteolysis promotes interactions between tetramers from adjoining membranes. In terms of tissue distribution, major component of lens fiber junctions.

It localises to the cell membrane. The protein resides in the cell junction. It carries out the reaction H2O(in) = H2O(out). With respect to regulation, the water channel activity is inhibited by calcium through calmodulin/CALM. Functionally, aquaporins form homotetrameric transmembrane channels, with each monomer independently mediating water transport across the plasma membrane along its osmotic gradient. Specifically expressed in lens fiber cells, this aquaporin is crucial for maintaining lens water homeostasis and transparency. Beyond water permeability, it also acts as a cell-to-cell adhesion molecule, forming thin junctions between lens fiber cells that are essential for maintaining the ordered structure and transparency of the lens. This Bos taurus (Bovine) protein is Lens fiber major intrinsic protein.